We begin with the raw amino-acid sequence, 288 residues long: SUR7 family protein pun1 (288 aa).

Over 1–11 (MGMGFNPIKAL) the chain is Cytoplasmic. Residues 12–32 (FTGIGTVCVGVGALLSILCII) traverse the membrane as a helical segment. 7 N-linked (GlcNAc...) asparagine glycosylation sites follow: N33, N50, N59, N66, N122, N153, and N160. Residues 33-185 (NQTQHNIAFQ…GACYAMRAMY (153 aa)) are Extracellular-facing. Residues 186-206 (ILGFIFFALTIVSIVISCLPF) form a helical membrane-spanning segment. The Cytoplasmic portion of the chain corresponds to 207–210 (FGPL). Residues 211–231 (FLNVFSFFATIFTFIAAVIAV) form a helical membrane-spanning segment. At 232 to 257 (ATYRIAISELEKNIEILNIPIVLGKK) the chain is on the extracellular side. The helical transmembrane segment at 258–278 (IYAYSFLSAAAGLAACILYFI) threads the bilayer. Residues 279–288 (GNLTSGYSPL) are Cytoplasmic-facing.

It belongs to the SUR7 family.

It localises to the golgi apparatus membrane. It is found in the cell membrane. The protein resides in the cell tip. Its function is as follows. Contributes to the wild-type cellular response to nitrogen stress through signaling pathways that regulate the expression of genes involved in amino acid biosynthesis. Required for wild-type filamentous growth, cell growth, and cell-cell adhesion. The sequence is that of SUR7 family protein pun1 (pun1) from Schizosaccharomyces pombe (strain 972 / ATCC 24843) (Fission yeast).